Here is a 439-residue protein sequence, read N- to C-terminus: Adenylosuccinate synthetase (439 aa).

Residues 12-18 and 40-42 each bind GTP; these read GDEGKGK and GHT. Aspartate 13 functions as the Proton acceptor in the catalytic mechanism. Positions 13 and 40 each coordinate Mg(2+). IMP is bound by residues 13–16, 38–41, threonine 137, arginine 151, glutamine 232, threonine 247, and arginine 311; these read DEGK and NAGH. Histidine 41 functions as the Proton donor in the catalytic mechanism. 307-313 serves as a coordination point for substrate; the sequence is ATTGRPR. GTP is bound by residues arginine 313, 339–341, and 421–423; these read KLD and SNG.

This sequence belongs to the adenylosuccinate synthetase family. In terms of assembly, homodimer. Mg(2+) serves as cofactor.

The protein resides in the cytoplasm. The catalysed reaction is IMP + L-aspartate + GTP = N(6)-(1,2-dicarboxyethyl)-AMP + GDP + phosphate + 2 H(+). The protein operates within purine metabolism; AMP biosynthesis via de novo pathway; AMP from IMP: step 1/2. Functionally, plays an important role in the de novo pathway of purine nucleotide biosynthesis. Catalyzes the first committed step in the biosynthesis of AMP from IMP. This chain is Adenylosuccinate synthetase, found in Salinibacter ruber (strain DSM 13855 / M31).